The primary structure comprises 778 residues: General transcription and DNA repair factor IIH helicase subunit XPD/RAD3 (778 aa).

Residues 7-285 (DLPVLFPYPK…KVDSQKLQDE (279 aa)) enclose the Helicase ATP-binding domain. Position 42–49 (42–49 (MPSGTGKT)) interacts with ATP. [4Fe-4S] cluster-binding residues include Cys-115, Cys-133, Cys-156, and Cys-191. The DEAH box signature appears at 235–238 (DEAH). The span at 750-765 (SRKDQGGFIENENKEG) shows a compositional bias: basic and acidic residues. The segment at 750 to 778 (SRKDQGGFIENENKEGEQDEDEDEDIEMQ) is disordered. Residues 766-778 (EQDEDEDEDIEMQ) are compositionally biased toward acidic residues.

It belongs to the helicase family. RAD3/XPD subfamily. In terms of assembly, component of the 7-subunit TFIIH core complex composed of XPB/SSL2, XPD/RAD3, SSL1, TFB1, TFB2, TFB4 and TFB5, which is active in NER. The core complex associates with the 3-subunit CTD-kinase module TFIIK composed of CCL1, KIN28 and TFB3 to form the 10-subunit holoenzyme (holo-TFIIH) active in transcription. An additionnal subunit, TFB6, plays a role in the dissociation of the SSL2 helicase from TFIIH after transcription initiation. [4Fe-4S] cluster is required as a cofactor. It depends on Mg(2+) as a cofactor.

The protein localises to the nucleus. It carries out the reaction Couples ATP hydrolysis with the unwinding of duplex DNA at the replication fork by translocating in the 5'-3' direction. This creates two antiparallel DNA single strands (ssDNA). The leading ssDNA polymer is the template for DNA polymerase III holoenzyme which synthesizes a continuous strand.. The enzyme catalyses ATP + H2O = ADP + phosphate + H(+). In terms of biological role, ATP-dependent 5'-3' DNA helicase. Component of the general transcription and DNA repair factor IIH (TFIIH) core complex, which is involved in general and transcription-coupled nucleotide excision repair (NER) of damaged DNA and, when complexed to TFIIK, in RNA transcription by RNA polymerase II. In NER, TFIIH acts by opening DNA around the lesion to allow the excision of the damaged oligonucleotide and its replacement by a new DNA fragment. The ATP-dependent helicase activity of XPD/RAD3 is required for DNA opening. In transcription, TFIIH has an essential role in transcription initiation. When the pre-initiation complex (PIC) has been established, TFIIH is required for promoter opening and promoter escape. Phosphorylation of the C-terminal tail (CTD) of the largest subunit of RNA polymerase II by the kinase module TFIIK controls the initiation of transcription. XPD/RAD3 acts by forming a bridge between TFIIK and the core-TFIIH complex. Involved in the maintenance of the fidelity of DNA replication. Has single-stranded DNA-dependent ATPase activity. 5'-3' DNA helicase activity requires ATP (dATP partially substitutes), will unwind over 800 bp dsDNA. Able to unwind an RNA:DNA hybrid. The sequence is that of General transcription and DNA repair factor IIH helicase subunit XPD/RAD3 from Saccharomyces cerevisiae (strain ATCC 204508 / S288c) (Baker's yeast).